Reading from the N-terminus, the 246-residue chain is Bis(5'-nucleosyl)-tetraphosphatase PrpE [asymmetrical] (246 aa).

Belongs to the PrpE family. It depends on Ni(2+) as a cofactor.

The catalysed reaction is P(1),P(4)-bis(5'-guanosyl) tetraphosphate + H2O = GMP + GTP + 2 H(+). In terms of biological role, asymmetrically hydrolyzes Ap4p to yield AMP and ATP. The polypeptide is Bis(5'-nucleosyl)-tetraphosphatase PrpE [asymmetrical] (Bacillus cereus (strain 03BB102)).